We begin with the raw amino-acid sequence, 299 residues long: ATP phosphoribosyltransferase (299 aa).

Belongs to the ATP phosphoribosyltransferase family. Long subfamily. It depends on Mg(2+) as a cofactor.

It localises to the cytoplasm. The catalysed reaction is 1-(5-phospho-beta-D-ribosyl)-ATP + diphosphate = 5-phospho-alpha-D-ribose 1-diphosphate + ATP. It functions in the pathway amino-acid biosynthesis; L-histidine biosynthesis; L-histidine from 5-phospho-alpha-D-ribose 1-diphosphate: step 1/9. With respect to regulation, feedback inhibited by histidine. Its function is as follows. Catalyzes the condensation of ATP and 5-phosphoribose 1-diphosphate to form N'-(5'-phosphoribosyl)-ATP (PR-ATP). Has a crucial role in the pathway because the rate of histidine biosynthesis seems to be controlled primarily by regulation of HisG enzymatic activity. This is ATP phosphoribosyltransferase (hisG) from Pasteurella multocida (strain Pm70).